A 121-amino-acid polypeptide reads, in one-letter code: Large ribosomal subunit protein uL22 (121 aa).

It belongs to the universal ribosomal protein uL22 family. In terms of assembly, part of the 50S ribosomal subunit.

Its function is as follows. This protein binds specifically to 23S rRNA; its binding is stimulated by other ribosomal proteins, e.g. L4, L17, and L20. It is important during the early stages of 50S assembly. It makes multiple contacts with different domains of the 23S rRNA in the assembled 50S subunit and ribosome. In terms of biological role, the globular domain of the protein is located near the polypeptide exit tunnel on the outside of the subunit, while an extended beta-hairpin is found that lines the wall of the exit tunnel in the center of the 70S ribosome. The sequence is that of Large ribosomal subunit protein uL22 from Synechocystis sp. (strain ATCC 27184 / PCC 6803 / Kazusa).